The sequence spans 95 residues: Glutamyl-tRNA(Gln) amidotransferase subunit C 1 (95 aa).

This sequence belongs to the GatC family. As to quaternary structure, heterotrimer of A, B and C subunits.

It catalyses the reaction L-glutamyl-tRNA(Gln) + L-glutamine + ATP + H2O = L-glutaminyl-tRNA(Gln) + L-glutamate + ADP + phosphate + H(+). The catalysed reaction is L-aspartyl-tRNA(Asn) + L-glutamine + ATP + H2O = L-asparaginyl-tRNA(Asn) + L-glutamate + ADP + phosphate + 2 H(+). Allows the formation of correctly charged Asn-tRNA(Asn) or Gln-tRNA(Gln) through the transamidation of misacylated Asp-tRNA(Asn) or Glu-tRNA(Gln) in organisms which lack either or both of asparaginyl-tRNA or glutaminyl-tRNA synthetases. The reaction takes place in the presence of glutamine and ATP through an activated phospho-Asp-tRNA(Asn) or phospho-Glu-tRNA(Gln). This Clostridium acetobutylicum (strain ATCC 824 / DSM 792 / JCM 1419 / IAM 19013 / LMG 5710 / NBRC 13948 / NRRL B-527 / VKM B-1787 / 2291 / W) protein is Glutamyl-tRNA(Gln) amidotransferase subunit C 1 (gatC1).